The chain runs to 305 residues: 2-oxoacid:ferredoxin oxidoreductase subunit beta (305 aa).

[4Fe-4S] cluster-binding residues include Cys-12, Cys-15, and Cys-46. Thiamine diphosphate is bound by residues 44-47 (IGCS) and His-65. Asp-90 lines the Mg(2+) pocket. Residue 91-92 (GD) coordinates thiamine diphosphate. Mg(2+) is bound by residues Asn-118 and Val-120. 122–123 (GL) is a thiamine diphosphate binding site. [4Fe-4S] cluster is bound at residue Cys-197.

In terms of assembly, heterodimer composed of an alpha and a beta subunit. The cofactor is [4Fe-4S] cluster. Requires thiamine diphosphate as cofactor. Mg(2+) is required as a cofactor.

Its subcellular location is the cytoplasm. The enzyme catalyses a 2-oxocarboxylate + 2 oxidized [2Fe-2S]-[ferredoxin] + CoA = an acyl-CoA + 2 reduced [2Fe-2S]-[ferredoxin] + CO2 + H(+). In terms of biological role, catalyzes the coenzyme A-dependent oxidative decarboxylation of different 2-oxoacids such as 2-oxoglutarate, pyruvate and 2-oxobutyrate to form their CoA derivatives. The sequence is that of 2-oxoacid:ferredoxin oxidoreductase subunit beta from Sulfolobus sp.